A 143-amino-acid polypeptide reads, in one-letter code: Large ribosomal subunit protein uL13 (143 aa).

The protein belongs to the universal ribosomal protein uL13 family. In terms of assembly, part of the 50S ribosomal subunit.

In terms of biological role, this protein is one of the early assembly proteins of the 50S ribosomal subunit, although it is not seen to bind rRNA by itself. It is important during the early stages of 50S assembly. In Prochlorococcus marinus subsp. pastoris (strain CCMP1986 / NIES-2087 / MED4), this protein is Large ribosomal subunit protein uL13.